The primary structure comprises 408 residues: Dicamba O-demethylase 1, ferredoxin reductase component (408 aa).

Residues G14, K49, V82, R130, D279, and V298 each contribute to the FAD site.

The protein belongs to the FAD-dependent oxidoreductase family. In terms of assembly, monomer. The dicamba O-demethylase multicomponent enzyme system is composed of an oxygenase component (DdmC) and an electron transfer component formed by a ferredoxin reductase (DdmA1) and a ferredoxin (DdmB). In vitro, dicamba O-demethylase assays in which DdmA2 is substituted for DdmA1 demonstrate that the two enzymes possess nearly identical activities. FAD serves as cofactor.

It catalyses the reaction 2 reduced [2Fe-2S]-[ferredoxin] + NAD(+) + H(+) = 2 oxidized [2Fe-2S]-[ferredoxin] + NADH. Its function is as follows. Component of the dicamba O-demethylase multicomponent enzyme system involved in the degradation of the herbicide dicamba. In vitro, catalyzes the transfers of electrons from ferredoxin (DdmB) to NADH. Both NADH and NADPH support enzyme activity, with NADH being markedly more effective than NADPH. This is Dicamba O-demethylase 1, ferredoxin reductase component from Stenotrophomonas maltophilia (Pseudomonas maltophilia).